Reading from the N-terminus, the 447-residue chain is Argininosuccinate synthase (447 aa).

Residues Ala-17–Ser-25 and Ala-43 contribute to the ATP site. L-citrulline is bound at residue Tyr-99. Residues Gly-129 and Thr-131 each contribute to the ATP site. Thr-131, Asn-135, and Asp-136 together coordinate L-aspartate. An L-citrulline-binding site is contributed by Asn-135. Residue Asp-136 coordinates ATP. L-citrulline contacts are provided by Arg-139 and Ser-192. Asp-194 serves as a coordination point for ATP. L-citrulline contacts are provided by Thr-201, Glu-203, and Glu-280.

The protein belongs to the argininosuccinate synthase family. Type 2 subfamily. In terms of assembly, homotetramer.

The protein resides in the cytoplasm. The enzyme catalyses L-citrulline + L-aspartate + ATP = 2-(N(omega)-L-arginino)succinate + AMP + diphosphate + H(+). It participates in amino-acid biosynthesis; L-arginine biosynthesis; L-arginine from L-ornithine and carbamoyl phosphate: step 2/3. In Salmonella paratyphi B (strain ATCC BAA-1250 / SPB7), this protein is Argininosuccinate synthase.